Consider the following 212-residue polypeptide: MAVGLLGTKLGMTQIFEEESGLAIPVTVVQAGPCTITQIKTAETDGYSAIQIGYLEVKEKALTKPELGHLKKVEASPLRHLKEYRVDDTATYTLGEAVKADIFNAGDLVDIAGTSMGRGFAGYQKRHNFKRGSMTHGSKNHRLPGSTGAGTTPGRVYPGKKMAGQYGAVKTTTRHLQVVRVDAERNLLLIKGAVPGKPGGLLNITPAKIVGK.

The interval 133-156 is disordered; it reads SMTHGSKNHRLPGSTGAGTTPGRV.

This sequence belongs to the universal ribosomal protein uL3 family. Part of the 50S ribosomal subunit. Forms a cluster with proteins L14 and L19.

Functionally, one of the primary rRNA binding proteins, it binds directly near the 3'-end of the 23S rRNA, where it nucleates assembly of the 50S subunit. This chain is Large ribosomal subunit protein uL3, found in Crocosphaera subtropica (strain ATCC 51142 / BH68) (Cyanothece sp. (strain ATCC 51142)).